Here is a 102-residue protein sequence, read N- to C-terminus: Small ribosomal subunit protein uS10 (102 aa).

It belongs to the universal ribosomal protein uS10 family. In terms of assembly, part of the 30S ribosomal subunit.

Involved in the binding of tRNA to the ribosomes. The polypeptide is Small ribosomal subunit protein uS10 (Cenarchaeum symbiosum (strain A)).